A 212-amino-acid polypeptide reads, in one-letter code: Sclerostin (212 aa).

Positions Met1–Gly23 are cleaved as a signal peptide. N-linked (GlcNAc...) asparagine glycosylation occurs at Asn52. 4 disulfide bridges follow: Cys79–Cys133, Cys93–Cys147, Cys104–Cys164, and Cys108–Cys166. The CTCK domain occupies Glu81–Arg171. N-linked (GlcNAc...) asparagine glycosylation occurs at Asn174. The interval Lys179–Tyr212 is disordered. Residues Thr190 to Lys202 are compositionally biased toward basic residues.

This sequence belongs to the sclerostin family. As to quaternary structure, interacts with LRP4 (via the extracellular domain); the interaction facilitates the inhibition of Wnt signaling. Interacts with LRP5 (via the first two YWTD-EGF repeat domains); the interaction inhibits Wnt-mediated signaling. Interacts with LRP6.

Its subcellular location is the secreted. It is found in the extracellular space. The protein localises to the extracellular matrix. In terms of biological role, negative regulator of bone growth that acts through inhibition of Wnt signaling and bone formation. This Bos taurus (Bovine) protein is Sclerostin.